The chain runs to 139 residues: Aspartate 1-decarboxylase (139 aa).

The active-site Schiff-base intermediate with substrate; via pyruvic acid is the Ser-25. Residue Ser-25 is modified to Pyruvic acid (Ser). Thr-57 is a binding site for substrate. Residue Tyr-58 is the Proton donor of the active site. 73 to 75 (GAA) contacts substrate. The disordered stretch occupies residues 117 to 139 (LGADPAEPVPGSDQARSPQAVTA). Positions 130–139 (QARSPQAVTA) are enriched in polar residues.

It belongs to the PanD family. Heterooctamer of four alpha and four beta subunits. It depends on pyruvate as a cofactor. In terms of processing, is synthesized initially as an inactive proenzyme, which is activated by self-cleavage at a specific serine bond to produce a beta-subunit with a hydroxyl group at its C-terminus and an alpha-subunit with a pyruvoyl group at its N-terminus.

The protein localises to the cytoplasm. It catalyses the reaction L-aspartate + H(+) = beta-alanine + CO2. Its pathway is cofactor biosynthesis; (R)-pantothenate biosynthesis; beta-alanine from L-aspartate: step 1/1. Catalyzes the pyruvoyl-dependent decarboxylation of aspartate to produce beta-alanine. This Streptomyces avermitilis (strain ATCC 31267 / DSM 46492 / JCM 5070 / NBRC 14893 / NCIMB 12804 / NRRL 8165 / MA-4680) protein is Aspartate 1-decarboxylase.